The sequence spans 629 residues: tRNA uridine 5-carboxymethylaminomethyl modification enzyme MnmG (629 aa).

13 to 18 contributes to the FAD binding site; sequence GGGHAG. 273-287 provides a ligand contact to NAD(+); it reads GPRYCPSIEDKITRF.

It belongs to the MnmG family. As to quaternary structure, homodimer. Heterotetramer of two MnmE and two MnmG subunits. The cofactor is FAD.

It localises to the cytoplasm. Its function is as follows. NAD-binding protein involved in the addition of a carboxymethylaminomethyl (cmnm) group at the wobble position (U34) of certain tRNAs, forming tRNA-cmnm(5)s(2)U34. The sequence is that of tRNA uridine 5-carboxymethylaminomethyl modification enzyme MnmG from Colwellia psychrerythraea (strain 34H / ATCC BAA-681) (Vibrio psychroerythus).